Consider the following 301-residue polypeptide: Probable 2-(5''-triphosphoribosyl)-3'-dephosphocoenzyme-A synthase (301 aa).

This sequence belongs to the CitG/MdcB family.

It catalyses the reaction 3'-dephospho-CoA + ATP = 2'-(5''-triphospho-alpha-D-ribosyl)-3'-dephospho-CoA + adenine. The protein is Probable 2-(5''-triphosphoribosyl)-3'-dephosphocoenzyme-A synthase of Pectobacterium carotovorum subsp. carotovorum (strain PC1).